A 486-amino-acid polypeptide reads, in one-letter code: Ribulose bisphosphate carboxylase large chain (486 aa).

Residues Asn-126 and Thr-176 each coordinate substrate. The Proton acceptor role is filled by Lys-178. Lys-180 is a substrate binding site. Residues Lys-204, Asp-206, and Glu-207 each contribute to the Mg(2+) site. Lys-204 bears the N6-carboxylysine mark. His-296 (proton acceptor) is an active-site residue. Substrate is bound by residues Arg-297, His-329, and Ser-381.

The protein belongs to the RuBisCO large chain family. Type I subfamily. Heterohexadecamer of 8 large chains and 8 small chains. Requires Mg(2+) as cofactor.

It carries out the reaction 2 (2R)-3-phosphoglycerate + 2 H(+) = D-ribulose 1,5-bisphosphate + CO2 + H2O. The catalysed reaction is D-ribulose 1,5-bisphosphate + O2 = 2-phosphoglycolate + (2R)-3-phosphoglycerate + 2 H(+). RuBisCO catalyzes two reactions: the carboxylation of D-ribulose 1,5-bisphosphate, the primary event in carbon dioxide fixation, as well as the oxidative fragmentation of the pentose substrate. Both reactions occur simultaneously and in competition at the same active site. This is Ribulose bisphosphate carboxylase large chain from Methylacidiphilum infernorum (isolate V4) (Methylokorus infernorum (strain V4)).